Reading from the N-terminus, the 478-residue chain is Ankyrin repeat and BTB/POZ domain-containing protein 1 (478 aa).

ANK repeat units follow at residues 1-31 and 35-64; these read MDTS…EVNV and WDST…RCEA. BTB domains follow at residues 115-182 and 272-346; these read SDVV…DIGV and PDIC…ELPP. Residues 451–477 are a coiled coil; it reads VQTYSAIEEAQQRLRALEDLLVSIGLD.

The protein resides in the cytoplasm. Its function is as follows. May act as a mediator of the PTEN growth-suppressive signaling pathway. May play a role in developmental processes. This is Ankyrin repeat and BTB/POZ domain-containing protein 1 from Mus musculus (Mouse).